The primary structure comprises 260 residues: NH(3)-dependent NAD(+) synthetase (260 aa).

Gly-31–Ser-38 is an ATP binding site. Asp-37 contacts Mg(2+). Residue Arg-112 participates in deamido-NAD(+) binding. Residue Thr-132 participates in ATP binding. Glu-137 contributes to the Mg(2+) binding site. Positions 161 and 183 each coordinate ATP.

The protein belongs to the NAD synthetase family. As to quaternary structure, homodimer.

It catalyses the reaction deamido-NAD(+) + NH4(+) + ATP = AMP + diphosphate + NAD(+) + H(+). It functions in the pathway cofactor biosynthesis; NAD(+) biosynthesis; NAD(+) from deamido-NAD(+) (ammonia route): step 1/1. Functionally, catalyzes the ATP-dependent amidation of deamido-NAD to form NAD. Uses ammonia as a nitrogen source. This is NH(3)-dependent NAD(+) synthetase from Helicobacter pylori (strain HPAG1).